A 96-amino-acid chain; its full sequence is Exodeoxyribonuclease 7 small subunit (96 aa).

Positions 61–79 are enriched in basic and acidic residues; that stretch reads ALTKDESQKTNKTGFRTES. A disordered region spans residues 61 to 96; sequence ALTKDESQKTNKTGFRTESKSTSQTSSDSVLEEDLF. Residues 80-89 show a composition bias toward low complexity; that stretch reads KSTSQTSSDS.

It belongs to the XseB family. Heterooligomer composed of large and small subunits.

It localises to the cytoplasm. It carries out the reaction Exonucleolytic cleavage in either 5'- to 3'- or 3'- to 5'-direction to yield nucleoside 5'-phosphates.. Functionally, bidirectionally degrades single-stranded DNA into large acid-insoluble oligonucleotides, which are then degraded further into small acid-soluble oligonucleotides. The sequence is that of Exodeoxyribonuclease 7 small subunit from Leptospira borgpetersenii serovar Hardjo-bovis (strain JB197).